The chain runs to 569 residues: Phosphatase and actin regulator 2 (569 aa).

The segment covering 1–13 (MGQTSVSALSPQP) has biased composition (polar residues). A disordered region spans residues 1-47 (MGQTSVSALSPQPGSVDGLDKASIANSDGPPAGSQTPPFKRKGKLST). Ser-27 is modified (phosphoserine). Thr-36 bears the Phosphothreonine mark. The RPEL 1 repeat unit spans residues 71-96 (AVLERKISTRQSREELIRRGLLKELP). Disordered stretches follow at residues 98-253 (QDGD…TGKP) and 295-483 (PTLP…QEAK). Basic and acidic residues predominate over residues 140 to 151 (GPPREEQAEEKT). A compositionally biased stretch (low complexity) spans 162 to 176 (GSKASSSPSASSTSS). Positions 212-224 (LSPNTVTSETSSL) are enriched in polar residues. Ser-357 carries the post-translational modification Phosphoserine. The span at 386 to 399 (TDDDDEEDDDDDST) shows a compositional bias: acidic residues. RPEL repeat units lie at residues 412 to 437 (DTLAIKLGNRPSKKELEDKNILQRTS), 450 to 475 (TKLVRRLSQRPTTEELEQRSILKQKN), and 488 to 513 (RRLSRKLSLRPTVPELQARRILRFNE). Residues 423-444 (SKKELEDKNILQRTSEEERQEL) show a composition bias toward basic and acidic residues. Ser-457 carries the phosphoserine modification. The span at 461–483 (TTEELEQRSILKQKNEEEEQEAK) shows a compositional bias: basic and acidic residues. Ser-495 carries the phosphoserine modification.

This sequence belongs to the phosphatase and actin regulator family. In terms of assembly, binds PPP1CA and actin. In terms of tissue distribution, expressed in the brain with high levels in the cerebellum, specifically in the Purkinje cell layer, choroid plexus and thalamus (ventral, rhomboid and anterior nuclei). Moderate to high expression in the hippocampus, piriform cortex, olfactory bulb, entorhinal cortex, as well as in geniculate bodies, lamboid septal zone, preoptic area and ventral pallidum (at protein level).

This chain is Phosphatase and actin regulator 2 (Phactr2), found in Rattus norvegicus (Rat).